The sequence spans 276 residues: Small ribosomal subunit protein uS2 (276 aa).

The interval 226–276 is disordered; sequence KKAREERQLAAAREAAGEPKSEDAPAEAAATEEAPATEAPAAEAQQENAAE. Low complexity predominate over residues 251–276; the sequence is AEAAATEEAPATEAPAAEAQQENAAE.

The protein belongs to the universal ribosomal protein uS2 family.

This chain is Small ribosomal subunit protein uS2, found in Corynebacterium efficiens (strain DSM 44549 / YS-314 / AJ 12310 / JCM 11189 / NBRC 100395).